The chain runs to 342 residues: Replication factor C subunit 4 (342 aa).

Residues valine 24, valine 36, 61–68 (GMPGIGKT), asparagine 157, and arginine 215 contribute to the ATP site.

This sequence belongs to the activator 1 small subunits family. In terms of assembly, heteropentamer of subunits rfc1, rfc2, rfc3, rfc4 and rfc5 that forms a complex (RFC) with PCNA in the presence of ATP. Two other complexes exist where rfc1 can be replaced by either ctf18 or elg1 to form the ctf18-RFC or the elg1-RFC complexes respectively.

It is found in the nucleus. In terms of biological role, the elongation of primed DNA templates by DNA polymerase delta and epsilon requires the action of the accessory proteins PCNA and activator 1. This Schizosaccharomyces pombe (strain 972 / ATCC 24843) (Fission yeast) protein is Replication factor C subunit 4 (rfc4).